Consider the following 346-residue polypeptide: MANAYKQAGVDIEAGYEAVSRMKKHVQTTMRKEVLGGLGGFGGMFDLSKFALEEPVLVSGTDGVGTKLMLAFMADKHDTIGIDAVAMCVNDIVVQGAEPLFFLDYIACGKAEPSKIENIVKGISEGCRQAGCALIGGETAEMPGMYSTEEYDLAGFTVGIVDKKKIVTGEKIEAGHVLIGLASSGIHSNGYSLVRKVLLEDGELSLDRIYGRLELPLGEELLKPTKIYVKPILELLKKYEVYGMAHITGGGFIENIPRMLPEEIGAEIELGSWEIQPIFSLLQEVGKLEEKEMFNIFNMGIGMVVAVKEEDAKDVVRLLEEQGETARIIGRTVQGAGVTFNGGTAL.

This sequence belongs to the AIR synthase family.

The protein resides in the cytoplasm. It catalyses the reaction 2-formamido-N(1)-(5-O-phospho-beta-D-ribosyl)acetamidine + ATP = 5-amino-1-(5-phospho-beta-D-ribosyl)imidazole + ADP + phosphate + H(+). It participates in purine metabolism; IMP biosynthesis via de novo pathway; 5-amino-1-(5-phospho-D-ribosyl)imidazole from N(2)-formyl-N(1)-(5-phospho-D-ribosyl)glycinamide: step 2/2. The protein is Phosphoribosylformylglycinamidine cyclo-ligase of Bacillus cereus (strain ATCC 10987 / NRS 248).